The following is a 210-amino-acid chain: Endonuclease III (210 aa).

One can recognise a HhH domain in the interval 108-127; that stretch reads RIELESLPGVGRKTANIILN. Cysteine 187, cysteine 194, cysteine 197, and cysteine 203 together coordinate [4Fe-4S] cluster.

It belongs to the Nth/MutY family. It depends on [4Fe-4S] cluster as a cofactor.

It carries out the reaction 2'-deoxyribonucleotide-(2'-deoxyribose 5'-phosphate)-2'-deoxyribonucleotide-DNA = a 3'-end 2'-deoxyribonucleotide-(2,3-dehydro-2,3-deoxyribose 5'-phosphate)-DNA + a 5'-end 5'-phospho-2'-deoxyribonucleoside-DNA + H(+). Its function is as follows. DNA repair enzyme that has both DNA N-glycosylase activity and AP-lyase activity. The DNA N-glycosylase activity releases various damaged pyrimidines from DNA by cleaving the N-glycosidic bond, leaving an AP (apurinic/apyrimidinic) site. The AP-lyase activity cleaves the phosphodiester bond 3' to the AP site by a beta-elimination, leaving a 3'-terminal unsaturated sugar and a product with a terminal 5'-phosphate. This Buchnera aphidicola subsp. Acyrthosiphon pisum (strain APS) (Acyrthosiphon pisum symbiotic bacterium) protein is Endonuclease III.